Consider the following 919-residue polypeptide: Transcriptional regulatory protein EDS1 (919 aa).

The interval 1–54 (MSHHVPNLYGTPIRDPHERKRNSASMGEVNQSVSSRNCERGSEKGTKQRKKASR) is disordered. Polar residues predominate over residues 23–36 (SASMGEVNQSVSSR). Positions 37 to 46 (NCERGSEKGT) are enriched in basic and acidic residues. Positions 56-85 (CDQCRRKRIKCRFDKHTGVCQGCLEVGEKC) form a DNA-binding region, zn(2)-C6 fungal-type. The tract at residues 297–338 (AGCPNKKLGTDGRSDKWDKNSTWKPVYRSSNPSHPSTEKNVS) is disordered. Positions 304-317 (LGTDGRSDKWDKNS) are enriched in basic and acidic residues. Over residues 318-338 (TWKPVYRSSNPSHPSTEKNVS) the composition is skewed to polar residues.

As to quaternary structure, binds DNA in a sequence-specific manner.

The protein resides in the nucleus. This chain is Transcriptional regulatory protein EDS1 (EDS1), found in Saccharomyces cerevisiae (strain RM11-1a) (Baker's yeast).